Reading from the N-terminus, the 452-residue chain is Flavanone 7-O-glucoside 2''-O-beta-L-rhamnosyltransferase (452 aa).

His21 serves as the catalytic Proton acceptor. His21 is an an anthocyanidin binding site. Asp121 (charge relay) is an active-site residue. A helical transmembrane segment spans residues 136–156; the sequence is IAAILFLPLSAVACSFLLHNI. Residues Ser268, Val330, His347, Gly351, Ser352, and Glu355 each coordinate UDP-beta-L-rhamnose. Residues 407–436 adopt a coiled-coil conformation; the sequence is KHVVLQEEAKQIRRKANEISESMKKIGDAE.

Belongs to the UDP-glycosyltransferase family. As to quaternary structure, monomer. Expressed in young fruits and leaves.

It localises to the membrane. The enzyme catalyses flavanone 7-O-beta-D-glucoside + UDP-beta-L-rhamnose = flavanone 7-O-[alpha-L-rhamnosyl-(1-&gt;2)-beta-D-glucoside] + UDP + H(+). Functionally, involved in the production of the bitter neohesperidosides in citrus. Shows a strict specificity for UDP-rhamnose as donor. This is Flavanone 7-O-glucoside 2''-O-beta-L-rhamnosyltransferase (C12RT1) from Citrus maxima (Pomelo).